The primary structure comprises 1203 residues: DNA-directed RNA polymerase subunit beta (1203 aa).

The segment at 1167–1203 (LSKYAQQQEEQRKAAAQTDESKTAPATKNESQPNTQD) is disordered. Residues 1190 to 1203 (APATKNESQPNTQD) are compositionally biased toward polar residues.

Belongs to the RNA polymerase beta chain family. In terms of assembly, the RNAP catalytic core consists of 2 alpha, 1 beta, 1 beta' and 1 omega subunit. When a sigma factor is associated with the core the holoenzyme is formed, which can initiate transcription.

It catalyses the reaction RNA(n) + a ribonucleoside 5'-triphosphate = RNA(n+1) + diphosphate. Its function is as follows. DNA-dependent RNA polymerase catalyzes the transcription of DNA into RNA using the four ribonucleoside triphosphates as substrates. This is DNA-directed RNA polymerase subunit beta from Levilactobacillus brevis (strain ATCC 367 / BCRC 12310 / CIP 105137 / JCM 1170 / LMG 11437 / NCIMB 947 / NCTC 947) (Lactobacillus brevis).